The primary structure comprises 454 residues: 3-phosphoshikimate 1-carboxyvinyltransferase (454 aa).

The tract at residues 1–31 (MSENHSEGASRPVISRRPAAGLRADHPVHVP) is disordered. Residues lysine 34, serine 35, and arginine 39 each contribute to the 3-phosphoshikimate site. Lysine 34 contacts phosphoenolpyruvate. Phosphoenolpyruvate contacts are provided by glycine 107 and arginine 135. 4 residues coordinate 3-phosphoshikimate: serine 180, glutamine 182, aspartate 334, and lysine 361. Glutamine 182 contacts phosphoenolpyruvate. Residue aspartate 334 is the Proton acceptor of the active site. Phosphoenolpyruvate-binding residues include arginine 365 and arginine 409.

The protein belongs to the EPSP synthase family. As to quaternary structure, monomer.

Its subcellular location is the cytoplasm. It catalyses the reaction 3-phosphoshikimate + phosphoenolpyruvate = 5-O-(1-carboxyvinyl)-3-phosphoshikimate + phosphate. It participates in metabolic intermediate biosynthesis; chorismate biosynthesis; chorismate from D-erythrose 4-phosphate and phosphoenolpyruvate: step 6/7. Functionally, catalyzes the transfer of the enolpyruvyl moiety of phosphoenolpyruvate (PEP) to the 5-hydroxyl of shikimate-3-phosphate (S3P) to produce enolpyruvyl shikimate-3-phosphate and inorganic phosphate. In Granulibacter bethesdensis (strain ATCC BAA-1260 / CGDNIH1), this protein is 3-phosphoshikimate 1-carboxyvinyltransferase.